Consider the following 306-residue polypeptide: Glutaminase (306 aa).

Positions 61, 111, 157, 164, 188, 240, and 258 each coordinate substrate.

The protein belongs to the glutaminase family. Homotetramer.

The catalysed reaction is L-glutamine + H2O = L-glutamate + NH4(+). In Pseudoalteromonas atlantica (strain T6c / ATCC BAA-1087), this protein is Glutaminase.